A 232-amino-acid chain; its full sequence is Large ribosomal subunit protein uL1 (232 aa).

Belongs to the universal ribosomal protein uL1 family. As to quaternary structure, part of the 50S ribosomal subunit.

Functionally, binds directly to 23S rRNA. The L1 stalk is quite mobile in the ribosome, and is involved in E site tRNA release. Its function is as follows. Protein L1 is also a translational repressor protein, it controls the translation of the L11 operon by binding to its mRNA. In Cereibacter sphaeroides (strain ATCC 17029 / ATH 2.4.9) (Rhodobacter sphaeroides), this protein is Large ribosomal subunit protein uL1.